Here is a 207-residue protein sequence, read N- to C-terminus: Small ribosomal subunit protein uS5 (207 aa).

Positions 1 to 51 (MTDTPTKQEITSKNDKVPGAIPGEQKKNNRNNDRKRNRRGDSKNLERDSDW) are disordered. Over residues 24-51 (EQKKNNRNNDRKRNRRGDSKNLERDSDW) the composition is skewed to basic and acidic residues. Residues 51-114 (WQERVVQIRR…SDGKKNLVRV (64 aa)) form the S5 DRBM domain.

It belongs to the universal ribosomal protein uS5 family. As to quaternary structure, part of the 30S ribosomal subunit. Contacts proteins S4 and S8.

Functionally, with S4 and S12 plays an important role in translational accuracy. Its function is as follows. Located at the back of the 30S subunit body where it stabilizes the conformation of the head with respect to the body. This is Small ribosomal subunit protein uS5 from Prochlorococcus marinus (strain MIT 9312).